The chain runs to 126 residues: Fumarate reductase subunit C (126 aa).

A run of 3 helical transmembrane segments spans residues 30–50 (IFVA…GAGG), 64–84 (VVVV…VTWF), and 105–125 (VLAG…WMVL).

Belongs to the FrdC family. As to quaternary structure, part of an enzyme complex containing four subunits: a flavoprotein (FrdA), an iron-sulfur protein (FrdB), and two hydrophobic anchor proteins (FrdC and FrdD).

It is found in the cell membrane. Anchors the catalytic components of the fumarate reductase complex to the cell membrane, binds quinones. The polypeptide is Fumarate reductase subunit C (Mycobacterium tuberculosis (strain CDC 1551 / Oshkosh)).